A 1102-amino-acid chain; its full sequence is Centrosomal protein of 128 kDa (1102 aa).

S31, S248, and S290 each carry phosphoserine. Coiled coils occupy residues 215–822 (VSDR…LETE) and 878–959 (EELK…ALQM). Positions 326–346 (QHQVPCISKQPLSHQDDQGDD) are disordered. Disordered regions lie at residues 991 to 1048 (SEKT…DHSR) and 1070 to 1102 (DPAS…KYKK). Residues 1009 to 1027 (QQRRDDTKPRIKSFRDDRP) are compositionally biased toward basic and acidic residues. Polar residues-rich tracts occupy residues 1039–1048 (HSSSCQDHSR) and 1076–1089 (GDTT…TSPQ). Residues 1090–1102 (SKKEEHEIKKYKK) show a composition bias toward basic and acidic residues.

Its subcellular location is the cytoplasm. It is found in the cytoskeleton. The protein localises to the microtubule organizing center. It localises to the centrosome. The protein resides in the centriole. Its subcellular location is the spindle pole. In Mus musculus (Mouse), this protein is Centrosomal protein of 128 kDa (Cep128).